Here is a 451-residue protein sequence, read N- to C-terminus: UPF0210 protein CLH_1879 (451 aa).

The protein belongs to the UPF0210 family. As to quaternary structure, homodimer.

This chain is UPF0210 protein CLH_1879, found in Clostridium botulinum (strain Alaska E43 / Type E3).